Here is a 122-residue protein sequence, read N- to C-terminus: NLFQFAKMINGKLGAFSVWNYISYGCYCGWGGQGTPKDATDRCCFVHDCCYGRVRGCNPKLAIYSYSFKKGNIVCGKNNGCLRDICECDRVAANCFHQNKNTYNKNYKFLSSSRCRQTSEQC.

Cystine bridges form between cysteine 26-cysteine 115, cysteine 28-cysteine 44, cysteine 43-cysteine 95, cysteine 49-cysteine 122, cysteine 50-cysteine 88, cysteine 57-cysteine 81, and cysteine 75-cysteine 86. Positions 27, 29, and 31 each coordinate Ca(2+). Histidine 47 is a catalytic residue. Aspartate 48 contributes to the Ca(2+) binding site. Residue aspartate 89 is part of the active site.

This sequence belongs to the phospholipase A2 family. Group II subfamily. D49 sub-subfamily. In terms of assembly, heterodimer of A (AC P04084) and B chains; non-covalently linked. The A chain (acidic) is non-toxic, and increases the toxicity of the B chain (basic). The A chain may act as factor stabilizing the complex structure and hence retaining its toxicity by preventing non-specific binding. Upon binding to the target membranes the A chain is postulated to dissociate. The cofactor is Ca(2+). As to expression, expressed by the venom gland.

It localises to the secreted. The catalysed reaction is a 1,2-diacyl-sn-glycero-3-phosphocholine + H2O = a 1-acyl-sn-glycero-3-phosphocholine + a fatty acid + H(+). Functionally, heterodimer: postsynaptic neurotoxin. Monomer: snake venom phospholipase A2 (PLA2) that shows hemolytic activity and inhibition of platelet aggregation. The hemolytic activity occurs only in presence of fatty acids (unsaturated fatty acids facilitate induce a strong hemolytic activity, whereas saturated fatty acids induce a slight activity). The inhibition of platelet aggregation is almost maximal when aggregation is induced by collagen, and arachidonic acid, whereas it is only of 30% when the aggregation is induced by ADP. PLA2 catalyzes the calcium-dependent hydrolysis of the 2-acyl groups in 3-sn-phosphoglycerides. The polypeptide is Basic phospholipase A2 vipoxin B chain (Vipera ammodytes meridionalis (Eastern sand viper)).